Consider the following 198-residue polypeptide: NAD(P)H dehydrogenase (quinone) (198 aa).

In terms of domain architecture, Flavodoxin-like spans 4-189 (ILVLYYSMYG…SIARYQGEYV (186 aa)). Residues 10 to 15 (SMYGHI) and 78 to 80 (TRF) contribute to the FMN site. Tyrosine 12 is a binding site for NAD(+). Tryptophan 98 contributes to the substrate binding site. FMN is bound by residues 113–118 (STGTGG) and histidine 133.

The protein belongs to the WrbA family. FMN serves as cofactor.

It catalyses the reaction a quinone + NADH + H(+) = a quinol + NAD(+). The enzyme catalyses a quinone + NADPH + H(+) = a quinol + NADP(+). This is NAD(P)H dehydrogenase (quinone) from Salmonella paratyphi B (strain ATCC BAA-1250 / SPB7).